The sequence spans 646 residues: Macrolide export ATP-binding/permease protein MacB (646 aa).

In terms of domain architecture, ABC transporter spans 7-245 (IRLEDICKTF…EATLQPHEEI (239 aa)). 43-50 (GASGSGKS) is an ATP binding site. Transmembrane regions (helical) follow at residues 274–294 (VLTLLGIIIGVSSVVTMLAIG), 528–548 (VAAISLLVGGIGVMNIMLVSV), 572–592 (FIIEALSVSAIGGAIGVILGL), and 609–629 (FGPVLLAFACAFATGLIFGFL).

This sequence belongs to the ABC transporter superfamily. Macrolide exporter (TC 3.A.1.122) family. In terms of assembly, homodimer.

The protein resides in the cell inner membrane. Functionally, non-canonical ABC transporter that contains transmembrane domains (TMD), which form a pore in the inner membrane, and an ATP-binding domain (NBD), which is responsible for energy generation. Confers resistance against macrolides. In Brucella abortus (strain 2308), this protein is Macrolide export ATP-binding/permease protein MacB.